The sequence spans 352 residues: DNA polymerase IV (352 aa).

The UmuC domain maps to 6-186 (IIHIDMDAFY…LPLGKIPGAG (181 aa)). Positions 10 and 104 each coordinate Mg(2+). The active site involves Glu105.

The protein belongs to the DNA polymerase type-Y family. In terms of assembly, monomer. It depends on Mg(2+) as a cofactor.

Its subcellular location is the cytoplasm. The catalysed reaction is DNA(n) + a 2'-deoxyribonucleoside 5'-triphosphate = DNA(n+1) + diphosphate. Its function is as follows. Poorly processive, error-prone DNA polymerase involved in untargeted mutagenesis. Copies undamaged DNA at stalled replication forks, which arise in vivo from mismatched or misaligned primer ends. These misaligned primers can be extended by PolIV. Exhibits no 3'-5' exonuclease (proofreading) activity. May be involved in translesional synthesis, in conjunction with the beta clamp from PolIII. In Neisseria gonorrhoeae (strain ATCC 700825 / FA 1090), this protein is DNA polymerase IV.